A 257-amino-acid polypeptide reads, in one-letter code: AN1-type zinc finger protein 2B (257 aa).

2 AN1-type zinc fingers span residues P4 to I52 and K94 to S142. C10, C15, C25, C28, C33, H36, H42, C44, C100, C105, C115, C118, C123, H126, H132, and C134 together coordinate Zn(2+). The segment at T141 to R151 is VCP/p97-interacting motif (VIM). The interval A152–R184 is disordered. Residues L155 to P179 are compositionally biased toward low complexity. Residues S163, S173, and S187 each carry the phosphoserine; by MAPK14 modification. UIM domains follow at residues S197 to Q216 and Q221 to Q240. A Cysteine methyl ester modification is found at C254. Residue C254 is the site of S-geranylgeranyl cysteine attachment. The CAAX motif motif lies at C254 to C257. Positions S255 to C257 are cleaved as a propeptide — removed in mature form.

Binds 'Lys-48'-linked polyubiquitin chains of ubiquitinated proteins. Associates with the proteasome complex; upon exposure to arsenite. Interacts (via VIM motif) with VCP; the interaction is direct. Interacts with BAG6. Interacts with IGF1R (nascent precursor form). Interacts with DERL1, FAF2, NPLOC4 and UFD1; probably through VCP. In terms of processing, phosphorylated by MAPK14. Phosphorylation has no effect on association with the proteasome complex.

It is found in the endoplasmic reticulum membrane. Its function is as follows. Plays a role in protein homeostasis by regulating both the translocation and the ubiquitin-mediated proteasomal degradation of nascent proteins at the endoplasmic reticulum. It is involved in the regulation of signal-mediated translocation of proteins into the endoplasmic reticulum. It also plays a role in the ubiquitin-mediated proteasomal degradation of proteins for which signal-mediated translocation to the endoplasmic reticulum has failed. May therefore function in the endoplasmic reticulum stress-induced pre-emptive quality control, a mechanism that selectively attenuates the translocation of newly synthesized proteins into the endoplasmic reticulum and reroutes them to the cytosol for proteasomal degradation. By controlling the steady-state expression of the IGF1R receptor, indirectly regulates the insulin-like growth factor receptor signaling pathway. The polypeptide is AN1-type zinc finger protein 2B (Mus musculus (Mouse)).